Reading from the N-terminus, the 427-residue chain is Trigger factor (427 aa).

The region spanning 163–248 is the PPIase FKBP-type domain; the sequence is GDTVVIDFVG…IHEVKAKEVP (86 aa).

It belongs to the FKBP-type PPIase family. Tig subfamily.

The protein resides in the cytoplasm. The catalysed reaction is [protein]-peptidylproline (omega=180) = [protein]-peptidylproline (omega=0). Its function is as follows. Involved in protein export. Acts as a chaperone by maintaining the newly synthesized protein in an open conformation. Functions as a peptidyl-prolyl cis-trans isomerase. This chain is Trigger factor, found in Streptococcus pneumoniae serotype 2 (strain D39 / NCTC 7466).